Reading from the N-terminus, the 206-residue chain is Smr domain-containing protein C11H11.03c (206 aa).

Residues 75–150 form the Smr domain; that stretch reads IDLHGLYIDE…NEGRIYVYLP (76 aa).

Its subcellular location is the cytoplasm. It localises to the nucleus. The chain is Smr domain-containing protein C11H11.03c from Schizosaccharomyces pombe (strain 972 / ATCC 24843) (Fission yeast).